Reading from the N-terminus, the 354-residue chain is Peptide chain release factor 1 (354 aa).

An N5-methylglutamine modification is found at Q230.

This sequence belongs to the prokaryotic/mitochondrial release factor family. In terms of processing, methylated by PrmC. Methylation increases the termination efficiency of RF1.

It localises to the cytoplasm. Functionally, peptide chain release factor 1 directs the termination of translation in response to the peptide chain termination codons UAG and UAA. The chain is Peptide chain release factor 1 from Pelobacter propionicus (strain DSM 2379 / NBRC 103807 / OttBd1).